Consider the following 627-residue polypeptide: Chaperone protein DnaK (627 aa).

Residue Thr197 is modified to Phosphothreonine; by autocatalysis. Residues 598–611 (AYAKEQGGQQGAAD) are compositionally biased toward low complexity. Positions 598–627 (AYAKEQGGQQGAADAGKKADDDDVIDAEVE) are disordered. Acidic residues predominate over residues 618-627 (DDDVIDAEVE).

Belongs to the heat shock protein 70 family.

In terms of biological role, acts as a chaperone. This is Chaperone protein DnaK from Sulfurovum sp. (strain NBC37-1).